The following is a 343-amino-acid chain: uncharacterized protein (343 aa).

Disordered regions lie at residues 1–25 (MSSKKGNMNKKPLKKSYSLNGLSGT), 62–119 (KNIR…DCSD), and 169–188 (NPKITKTIPNKSNGKTTKKS). The span at 62 to 71 (KNIRQFKKSQ) shows a compositional bias: basic residues. A compositionally biased stretch (basic and acidic residues) spans 72 to 81 (NKTDTEKSGE). Over residues 83-107 (NDSDYSDYSDNSDDVDDLDDVDDLN) the composition is skewed to acidic residues.

This is an uncharacterized protein from Acanthamoeba polyphaga (Amoeba).